The primary structure comprises 161 residues: Cyclic pyranopterin monophosphate synthase (161 aa).

Substrate contacts are provided by residues 75-77 (LCH) and 113-114 (ME). Asp128 is a catalytic residue.

The protein belongs to the MoaC family. In terms of assembly, homohexamer; trimer of dimers.

The enzyme catalyses (8S)-3',8-cyclo-7,8-dihydroguanosine 5'-triphosphate = cyclic pyranopterin phosphate + diphosphate. The protein operates within cofactor biosynthesis; molybdopterin biosynthesis. In terms of biological role, catalyzes the conversion of (8S)-3',8-cyclo-7,8-dihydroguanosine 5'-triphosphate to cyclic pyranopterin monophosphate (cPMP). The sequence is that of Cyclic pyranopterin monophosphate synthase from Enterobacter sp. (strain 638).